Here is a 784-residue protein sequence, read N- to C-terminus: Cadherin-5 (784 aa).

The signal sequence occupies residues 1–25; it reads MQRLMMLLATSGACLGLLAVAAVAA. A propeptide spanning residues 26 to 47 is cleaved from the precursor; the sequence is AGANPAQRDTHSLLPTHRRQKR. 5 Cadherin domains span residues 48 to 151, 152 to 258, 259 to 372, 373 to 477, and 478 to 593; these read DWIW…WPVF, THRL…FPFF, TQTK…PPIF, QQPF…DNAP, and EFAK…MAAQ. Residues 48–599 are Extracellular-facing; that stretch reads DWIWNQMHID…MAAQVGVSIQ (552 aa). Ca(2+) is bound by residues Glu-58 and Glu-59. The N-linked (GlcNAc...) (complex) asparagine glycan is linked to Asn-61. The Ca(2+) site is built by Asp-109 and Glu-111. An N-linked (GlcNAc...) (complex) asparagine glycan is attached at Asn-112. Ca(2+) is bound by residues Asp-143, Val-144, Asn-145, Asp-146, and Asn-147. The N-linked (GlcNAc...) asparagine glycan is linked to Asn-157. Ca(2+) contacts are provided by Asp-177, Asp-179, His-186, and Asp-231. An N-linked (GlcNAc...) asparagine glycan is attached at Asn-362. Asn-442 carries N-linked (GlcNAc...) (complex) asparagine glycosylation. Residues Asn-523 and Asn-535 are each glycosylated (N-linked (GlcNAc...) asparagine). Residues 600–620 form a helical membrane-spanning segment; it reads AVVAILLCILTITVITLLIFL. The interval 621 to 660 is required for interaction with PALS1; that stretch reads RRRLRKQARAHGKSVPEIHEQLVTYDEEGGGEMDTTSYDV. Topologically, residues 621–784 are cytoplasmic; that stretch reads RRRLRKQARA…GSDPREELLY (164 aa).

Part of a complex composed of AMOTL2, MAGI1 and CDH5, within the complex AMOTL2 acts as a scaffold protein for the interaction of MAGI1 with CDH5. The complex is required for coupling actin fibers to cell junctions in endothelial cells. Within the complex AMOTL2 (via its N-terminus) interacts with CDH5. Interacts (via cadherin 5 domain) with PTPRB. Interacts with TRPC4. Interacts with KRIT1. Interacts with PARD3. Interacts with RTN4 (isoform B). Interacts with PALS1; the interaction promotes PALS1 localization to cell junctions and is required for CDH5-mediated vascular lumen formation and endothelial cell. Interacts with CTNND1/p120-catenin; the interaction controls CADH5 endocytosis. In terms of processing, phosphorylated on tyrosine residues by KDR/VEGFR-2. Dephosphorylated by PTPRB. O-glycosylated. As to expression, expressed in endothelial cells (at protein level). Expressed in the brain.

The protein localises to the cell junction. It is found in the adherens junction. It localises to the cell membrane. The protein resides in the cytoplasm. Cadherins are calcium-dependent cell adhesion proteins. They preferentially interact with themselves in a homophilic manner in connecting cells; cadherins may thus contribute to the sorting of heterogeneous cell types. This cadherin may play a important role in endothelial cell biology through control of the cohesion and organization of the intercellular junctions. It associates with alpha-catenin forming a link to the cytoskeleton. Plays a role in coupling actin fibers to cell junctions in endothelial cells, via acting as a cell junctional complex anchor for AMOTL2 and MAGI1. Acts in concert with KRIT1 and PALS1 to establish and maintain correct endothelial cell polarity and vascular lumen. These effects are mediated by recruitment and activation of the Par polarity complex and RAP1B. Required for activation of PRKCZ and for the localization of phosphorylated PRKCZ, PARD3, TIAM1 and RAP1B to the cell junction. Associates with CTNND1/p120-catenin to control CADH5 endocytosis. The sequence is that of Cadherin-5 from Homo sapiens (Human).